The following is a 371-amino-acid chain: Tetraacyldisaccharide 4'-kinase (371 aa).

An ATP-binding site is contributed by 48–55 (SAGGTGKT).

The protein belongs to the LpxK family.

It catalyses the reaction a lipid A disaccharide + ATP = a lipid IVA + ADP + H(+). It functions in the pathway glycolipid biosynthesis; lipid IV(A) biosynthesis; lipid IV(A) from (3R)-3-hydroxytetradecanoyl-[acyl-carrier-protein] and UDP-N-acetyl-alpha-D-glucosamine: step 6/6. Functionally, transfers the gamma-phosphate of ATP to the 4'-position of a tetraacyldisaccharide 1-phosphate intermediate (termed DS-1-P) to form tetraacyldisaccharide 1,4'-bis-phosphate (lipid IVA). The sequence is that of Tetraacyldisaccharide 4'-kinase from Chlorobium chlorochromatii (strain CaD3).